The following is a 424-amino-acid chain: UDP-N-acetylglucosamine 1-carboxyvinyltransferase (424 aa).

22–23 (KN) contributes to the phosphoenolpyruvate binding site. Arg93 provides a ligand contact to UDP-N-acetyl-alpha-D-glucosamine. Cys117 serves as the catalytic Proton donor. The residue at position 117 (Cys117) is a 2-(S-cysteinyl)pyruvic acid O-phosphothioketal. UDP-N-acetyl-alpha-D-glucosamine contacts are provided by residues 162 to 165 (KVSV), Asp307, and Ile329.

The protein belongs to the EPSP synthase family. MurA subfamily.

The protein localises to the cytoplasm. It catalyses the reaction phosphoenolpyruvate + UDP-N-acetyl-alpha-D-glucosamine = UDP-N-acetyl-3-O-(1-carboxyvinyl)-alpha-D-glucosamine + phosphate. Its pathway is cell wall biogenesis; peptidoglycan biosynthesis. Functionally, cell wall formation. Adds enolpyruvyl to UDP-N-acetylglucosamine. This is UDP-N-acetylglucosamine 1-carboxyvinyltransferase from Actinobacillus pleuropneumoniae serotype 7 (strain AP76).